A 1169-amino-acid polypeptide reads, in one-letter code: MYLKTIKLAGFKSFVDPTLIPIRGSMNAIVGPNGCGKSNVVDAVRWVIGETSAKQLRGQSMSDVIFNGTTSRKPVGKASIELHFDNSEGRIGGEYAKYGEIAIRREVERDGQSNYFINGAHVRRRDVVDVFLGTGLGPRSYAIVEQGMISNLIEAKPEELRVYIEEAAGISKYKERRRETESRMRHTQENLDRVNDIAEELAKQLRHLKRQANAAERYKAYKQEERALGAQFKVLQWKALDHKLSEHDQAINQKNTRREEKQSEQHRIETEIEKMREQLTDVNEKHNAVQKRYYGLGADIARLEQRIKDTQEKIHQWQSELEENENVWEELQNNTAECEAQITELETELEHLKPRSSDIHSAAAEASKELAQAESNMARWQEAWEAFQAETSQTMSQLEVMRTKREHCERQLTDLEKSKQQLQQNLKQLQLDQLLNEIAPLSSQSELLNAELSDSQSKLQSLAETIASRRDANQTTREELQTQRRELQALEARAASLEALQKAALGESDGKISEWLSSQQLKENPRLGQKLVVNPGWEIAVETVLSGFFDAVCVDAALPFLTDLTTVSEGRVTLVEKKSVSASAFDKAPTLASQVKSEWPFQQWLAGIYIADTLDQAKQLQSSLQENESVITKEGLWLGPHWARISKLQDAPQSGFLLREQQLKQLKANILGQQKKCDEQEALLKSGEQQLNQLETDRDTLLQTYQKLNAEATTVQSALSTKQAQLDNAQQQQTRLKIGLNECEQQIEQCQQQLTLIKNKASSLDDSQGLLATRREEMIRERDHYRTQLIELREKAHQKRKEADELEIRLASNEDQLSLLRQTVARDQRQLKQLTERREMLSQYLSEGDKPLEELNEKLQTQLEQRLILETELREVEKELEEANQLLRHLEEKRVSTQKALNEAQAQLEELRMQRQTVSVRQTTIKEQLSENDFDLEQVMAELPEEATIESWQEKLDQLVERIQRMGPINLAAIEEYESVNERKNYLDKQHADLTEALEILKNAIHKIDRETRAKFQETYDQVNQQFQSLFPRIFGGGRATLEMTDTDLLTAGVIVRAQPPGKRNVTIHMLSGGEKALTAVALVFSLFQLNPAPFCILDEVDAPLDDINVGRFCQLVKEMSKEVQFLVISHNKVTIEMADYLMGVTMQEPGVSRIVSVNMQEAIGLVEA.

32 to 39 contacts ATP; sequence PNGCGKSN. Coiled-coil stretches lie at residues 170-507 and 659-1030; these read ISKY…ALGE and REQQ…FQSL.

The protein belongs to the SMC family. Homodimer.

It localises to the cytoplasm. Functionally, required for chromosome condensation and partitioning. This is Chromosome partition protein Smc from Coxiella burnetii (strain RSA 493 / Nine Mile phase I).